The following is a 194-amino-acid chain: Fe/S biogenesis protein NfuA (194 aa).

Positions 151 and 154 each coordinate [4Fe-4S] cluster.

Belongs to the NfuA family. In terms of assembly, homodimer. [4Fe-4S] cluster serves as cofactor.

Involved in iron-sulfur cluster biogenesis. Binds a 4Fe-4S cluster, can transfer this cluster to apoproteins, and thereby intervenes in the maturation of Fe/S proteins. Could also act as a scaffold/chaperone for damaged Fe/S proteins. In Pasteurella multocida (strain Pm70), this protein is Fe/S biogenesis protein NfuA.